We begin with the raw amino-acid sequence, 277 residues long: MNGFRVLLRSNLSMLLLLALLHFQSLGLDVDSRSAAEVCATHTISPGPKGDDGERGDTGEEGKDGKVGRQGPKGVKGELGDMGAQGNIGKSGPIGKKGDKGEKGLLGIPGEKGKAGTICDCGRYRKVVGQLDISVARLKTSMKFIKNVIAGIRETEEKFYYIVQEEKNYRESLTHCRIRGGMLAMPKDEVVNTLIADYVAKSGFFRVFIGVNDLEREGQYVFTDNTPLQNYSNWKEEEPSDPSGHEDCVEMLSSGRWNDTECHLTMYFVCEFVKKKK.

Residues 1–27 (MNGFRVLLRSNLSMLLLLALLHFQSLG) form the signal peptide. A glycan (N-linked (GlcNAc...) asparagine) is linked at asparagine 11. The tract at residues 41–103 (THTISPGPKG…IGKKGDKGEK (63 aa)) is disordered. Residues 45–103 (SPGPKGDDGERGDTGEEGKDGKVGRQGPKGVKGELGDMGAQGNIGKSGPIGKKGDKGEK) enclose the Collagen-like domain. Residues 49-67 (KGDDGERGDTGEEGKDGKV) are compositionally biased toward basic and acidic residues. Residues 155–271 (TEEKFYYIVQ…CHLTMYFVCE (117 aa)) enclose the C-type lectin domain. Cystine bridges form between cysteine 176-cysteine 270 and cysteine 248-cysteine 262. A glycan (N-linked (GlcNAc...) asparagine) is linked at asparagine 258.

It belongs to the COLEC10/COLEC11 family. In terms of tissue distribution, expressed mainly in the liver and stomach, but also in muscles, testes, and intestines.

Its subcellular location is the secreted. The protein resides in the golgi apparatus. It localises to the cytoplasm. Its function is as follows. Lectin that binds to various sugars: galactose &gt; mannose = fucose &gt; N-acetylglucosamine &gt; N-acetylgalactosamine. Acts as a chemoattractant, probably involved in the regulation of cell migration. The sequence is that of Collectin-10 (Colec10) from Mus musculus (Mouse).